The chain runs to 227 residues: MGQKVNPIGLRVGINRTWDSRWFADETYAKLLHQDLKLRKYLREKLAQAGVSRVVIERPAKKARITIHTARPGVVIGKKGADIEVLRKELSKMTGSEVHLNIVEIRKPELDAQLVAESIAQQLERRVAFRRAMKRAVQSAMRLGAQGIRINCSGRLGGAEIARMEWYREGRVPLHTLRADVDYGVGTAHTTYGSCGVKVWVFKGEILAHDPMAQDKRAAGETAPAGR.

A KH type-2 domain is found at 38–106 (LRKYLREKLA…EVHLNIVEIR (69 aa)).

Belongs to the universal ribosomal protein uS3 family. In terms of assembly, part of the 30S ribosomal subunit. Forms a tight complex with proteins S10 and S14.

Functionally, binds the lower part of the 30S subunit head. Binds mRNA in the 70S ribosome, positioning it for translation. This chain is Small ribosomal subunit protein uS3, found in Paramagnetospirillum magneticum (strain ATCC 700264 / AMB-1) (Magnetospirillum magneticum).